Reading from the N-terminus, the 600-residue chain is DNA ligase (600 aa).

Asp258 lines the ATP pocket. The active-site N6-AMP-lysine intermediate is Lys260. Residues Arg265, Arg280, Glu310, Phe350, Arg427, and Lys433 each coordinate ATP.

Belongs to the ATP-dependent DNA ligase family. It depends on Mg(2+) as a cofactor.

The enzyme catalyses ATP + (deoxyribonucleotide)n-3'-hydroxyl + 5'-phospho-(deoxyribonucleotide)m = (deoxyribonucleotide)n+m + AMP + diphosphate.. Inhibited by PCNA123 and PCNA323. In terms of biological role, DNA ligase that seals nicks in double-stranded DNA during DNA replication, DNA recombination and DNA repair. The protein is DNA ligase of Sulfurisphaera tokodaii (strain DSM 16993 / JCM 10545 / NBRC 100140 / 7) (Sulfolobus tokodaii).